A 249-amino-acid chain; its full sequence is tRNA (guanine-N(7)-)-methyltransferase (249 aa).

Residues Glu-80, Glu-105, Asp-132, and Asp-155 each coordinate S-adenosyl-L-methionine. Residue Asp-155 is part of the active site. Residues Lys-159, Asp-191, and 228 to 231 (TKFE) each bind substrate.

This sequence belongs to the class I-like SAM-binding methyltransferase superfamily. TrmB family.

The enzyme catalyses guanosine(46) in tRNA + S-adenosyl-L-methionine = N(7)-methylguanosine(46) in tRNA + S-adenosyl-L-homocysteine. It participates in tRNA modification; N(7)-methylguanine-tRNA biosynthesis. Its function is as follows. Catalyzes the formation of N(7)-methylguanine at position 46 (m7G46) in tRNA. This Mannheimia succiniciproducens (strain KCTC 0769BP / MBEL55E) protein is tRNA (guanine-N(7)-)-methyltransferase.